The primary structure comprises 125 residues: Large ribosomal subunit protein bL12 (125 aa).

This sequence belongs to the bacterial ribosomal protein bL12 family. In terms of assembly, homodimer. Part of the ribosomal stalk of the 50S ribosomal subunit. Forms a multimeric L10(L12)X complex, where L10 forms an elongated spine to which 2 to 4 L12 dimers bind in a sequential fashion. Binds GTP-bound translation factors.

In terms of biological role, forms part of the ribosomal stalk which helps the ribosome interact with GTP-bound translation factors. Is thus essential for accurate translation. The protein is Large ribosomal subunit protein bL12 of Thermoanaerobacter pseudethanolicus (strain ATCC 33223 / 39E) (Clostridium thermohydrosulfuricum).